Here is a 1087-residue protein sequence, read N- to C-terminus: Fanconi-associated nuclease 1 homolog (1087 aa).

Disordered stretches follow at residues 1-79, 104-154, 169-202, 459-486, 816-835, and 842-871; these read MKSN…TPIK, FQKA…PNNL, EFLL…NNIT, TQNS…NNNI, ITSD…EKEN, and SVKK…EEEI. Residues 41–79 show a composition bias toward low complexity; the sequence is TTTPPKTPTQPIRFTQNNNKENDKSNNNNNNNNTITPIK. The segment covering 104–115 has biased composition (polar residues); sequence FQKASTPSSPQI. Composition is skewed to low complexity over residues 118–154, 182–202, and 467–485; these read KLPQ…PNNL, NTTT…NNIT, and NNNN…NNNN. Coiled-coil stretches lie at residues 419 to 490 and 830 to 874; these read WKSK…KEYD and KIEK…IIEI. Residues 848–871 are compositionally biased toward acidic residues; sequence EQEEEEEEEEEGQGQEEEEEEEEI. Mn(2+)-binding residues include glutamate 899, aspartate 1023, glutamate 1051, and valine 1052. The VRR-NUC domain maps to 961-1083; it reads DDLLILLNQS…GCDVEVCLVK (123 aa).

The protein belongs to the FAN1 family. It depends on Mn(2+) as a cofactor. Mg(2+) serves as cofactor.

The catalysed reaction is Hydrolytically removes 5'-nucleotides successively from the 3'-hydroxy termini of 3'-hydroxy-terminated oligonucleotides.. Nuclease required for the repair of DNA interstrand cross-links (ICL). Acts as a 5'-3' exonuclease that anchors at a cut end of DNA and cleaves DNA successively at every third nucleotide, allowing to excise an ICL from one strand through flanking incisions. This chain is Fanconi-associated nuclease 1 homolog (mtmr15), found in Dictyostelium discoideum (Social amoeba).